The chain runs to 724 residues: Phosphoribosylformylglycinamidine synthase subunit PurL (724 aa).

His-34 is a catalytic residue. Residue Tyr-37 coordinates ATP. Glu-78 contacts Mg(2+). Substrate-binding positions include 79-82 and Arg-101; that span reads SHNH. The Proton acceptor role is filled by His-80. Asp-102 serves as a coordination point for Mg(2+). Gln-226 is a substrate binding site. Asp-254 is a binding site for Mg(2+). Substrate is bound at residue 298-300; sequence ESQ. ATP contacts are provided by Asp-480 and Gly-517. Residue Asn-518 participates in Mg(2+) binding. Residue Ser-520 coordinates substrate.

Belongs to the FGAMS family. As to quaternary structure, monomer. Part of the FGAM synthase complex composed of 1 PurL, 1 PurQ and 2 PurS subunits.

The protein localises to the cytoplasm. The enzyme catalyses N(2)-formyl-N(1)-(5-phospho-beta-D-ribosyl)glycinamide + L-glutamine + ATP + H2O = 2-formamido-N(1)-(5-O-phospho-beta-D-ribosyl)acetamidine + L-glutamate + ADP + phosphate + H(+). It functions in the pathway purine metabolism; IMP biosynthesis via de novo pathway; 5-amino-1-(5-phospho-D-ribosyl)imidazole from N(2)-formyl-N(1)-(5-phospho-D-ribosyl)glycinamide: step 1/2. Part of the phosphoribosylformylglycinamidine synthase complex involved in the purines biosynthetic pathway. Catalyzes the ATP-dependent conversion of formylglycinamide ribonucleotide (FGAR) and glutamine to yield formylglycinamidine ribonucleotide (FGAM) and glutamate. The FGAM synthase complex is composed of three subunits. PurQ produces an ammonia molecule by converting glutamine to glutamate. PurL transfers the ammonia molecule to FGAR to form FGAM in an ATP-dependent manner. PurS interacts with PurQ and PurL and is thought to assist in the transfer of the ammonia molecule from PurQ to PurL. This chain is Phosphoribosylformylglycinamidine synthase subunit PurL, found in Methanopyrus kandleri (strain AV19 / DSM 6324 / JCM 9639 / NBRC 100938).